The chain runs to 195 residues: Imidazoleglycerol-phosphate dehydratase (195 aa).

This sequence belongs to the imidazoleglycerol-phosphate dehydratase family.

The protein resides in the cytoplasm. The catalysed reaction is D-erythro-1-(imidazol-4-yl)glycerol 3-phosphate = 3-(imidazol-4-yl)-2-oxopropyl phosphate + H2O. Its pathway is amino-acid biosynthesis; L-histidine biosynthesis; L-histidine from 5-phospho-alpha-D-ribose 1-diphosphate: step 6/9. The protein is Imidazoleglycerol-phosphate dehydratase of Cereibacter sphaeroides (strain ATCC 17025 / ATH 2.4.3) (Rhodobacter sphaeroides).